A 293-amino-acid polypeptide reads, in one-letter code: tRNA pseudouridine synthase B (293 aa).

Catalysis depends on Asp-39, which acts as the Nucleophile.

It belongs to the pseudouridine synthase TruB family. Type 1 subfamily.

It catalyses the reaction uridine(55) in tRNA = pseudouridine(55) in tRNA. Functionally, responsible for synthesis of pseudouridine from uracil-55 in the psi GC loop of transfer RNAs. The protein is tRNA pseudouridine synthase B of Streptococcus thermophilus (strain ATCC BAA-250 / LMG 18311).